The sequence spans 61 residues: Beta-insect depressant toxin BaIT2 (61 aa).

Positions 1-61 (DGYIRRRDGC…TWKSETNTCG (61 aa)) constitute an LCN-type CS-alpha/beta domain. 4 disulfide bridges follow: C10-C60, C14-C35, C21-C42, and C25-C44.

This sequence belongs to the long (4 C-C) scorpion toxin superfamily. Sodium channel inhibitor family. Beta subfamily. In terms of tissue distribution, expressed by the venom gland.

It is found in the secreted. Its function is as follows. Depressant insect beta-toxins cause a transient contraction paralysis followed by a slow flaccid paralysis. They bind voltage-independently at site-4 of sodium channels (Nav) and shift the voltage of activation toward more negative potentials thereby affecting sodium channel activation and promoting spontaneous and repetitive firing. This toxin is active only on insects. The sequence is that of Beta-insect depressant toxin BaIT2 from Buthacus arenicola (North African scorpion).